A 397-amino-acid chain; its full sequence is Serpin B10 (397 aa).

Positions 62–85 (RDQGVKSSPESEKKRKMEFNSSNS) are disordered. The span at 70-79 (PESEKKRKME) shows a compositional bias: basic and acidic residues. Residues 74–77 (KKRK) carry the Nuclear localization signal motif.

Belongs to the serpin family. Ov-serpin subfamily.

The protein localises to the nucleus. It is found in the cytoplasm. Its function is as follows. Protease inhibitor that may play a role in the regulation of protease activities during hematopoiesis and apoptosis induced by TNF. May regulate protease activities in the cytoplasm and in the nucleus. The sequence is that of Serpin B10 (SERPINB10) from Papio anubis (Olive baboon).